The chain runs to 438 residues: 3-phosphoshikimate 1-carboxyvinyltransferase (438 aa).

The 3-phosphoshikimate site is built by Lys-21, Ser-22, and Arg-26. Lys-21 contributes to the phosphoenolpyruvate binding site. The phosphoenolpyruvate site is built by Gly-95 and Arg-123. Residues Ser-167, Gln-169, Asp-315, and Lys-342 each coordinate 3-phosphoshikimate. Gln-169 lines the phosphoenolpyruvate pocket. Asp-315 (proton acceptor) is an active-site residue. The phosphoenolpyruvate site is built by Arg-346 and Arg-387.

It belongs to the EPSP synthase family. Monomer.

The protein resides in the cytoplasm. The enzyme catalyses 3-phosphoshikimate + phosphoenolpyruvate = 5-O-(1-carboxyvinyl)-3-phosphoshikimate + phosphate. It participates in metabolic intermediate biosynthesis; chorismate biosynthesis; chorismate from D-erythrose 4-phosphate and phosphoenolpyruvate: step 6/7. Functionally, catalyzes the transfer of the enolpyruvyl moiety of phosphoenolpyruvate (PEP) to the 5-hydroxyl of shikimate-3-phosphate (S3P) to produce enolpyruvyl shikimate-3-phosphate and inorganic phosphate. The chain is 3-phosphoshikimate 1-carboxyvinyltransferase from Coxiella burnetii (strain CbuG_Q212) (Coxiella burnetii (strain Q212)).